The primary structure comprises 155 residues: Large ribosomal subunit protein bL9c (155 aa).

This sequence belongs to the bacterial ribosomal protein bL9 family.

It is found in the plastid. The protein resides in the chloroplast. Its function is as follows. Binds to the 23S rRNA. The chain is Large ribosomal subunit protein bL9c from Porphyra purpurea (Red seaweed).